A 184-amino-acid chain; its full sequence is Ribosome-recycling factor (184 aa).

Residues 141 to 165 (DEKNGDITEDDLRSQTDDVQKATDN) are disordered.

It belongs to the RRF family.

The protein localises to the cytoplasm. Its function is as follows. Responsible for the release of ribosomes from messenger RNA at the termination of protein biosynthesis. May increase the efficiency of translation by recycling ribosomes from one round of translation to another. This is Ribosome-recycling factor from Staphylococcus epidermidis (strain ATCC 35984 / DSM 28319 / BCRC 17069 / CCUG 31568 / BM 3577 / RP62A).